The primary structure comprises 480 residues: MGKGEIVQVIGPVVDVEFPLDKDLPDINNALRVTNNNGDTLVLEVTLELGDGVLRTISMESTDGLRRGMEVEDTGAPISVPVGKDTLGRVFNVLGDPIDGGPALGKDVKREGIHKEAPKYDELSTSEEILETGIKVIDLLEPYVRGGKVGLFGGAGVGKTTIIQELIHNIAQEHGGISVFTGVGERTREGNDLYFEMKASGVLSKTAMVFGQMNEPPGARMRVALTGLTIAEYFRDVEGLDVLLFIDNIFRFTQAGSEVSALLGRMPSAVGYQPTLATEMGQLQERITSTKKGSITSIQAVYVPADDYTDPAPATTFAHLDATTNLERRLVEQGIYPAVDPLESTSSALDPEVVGEEHYQVAVQVQHILQRYQELQDIISVLGMDELSDDEKLIVERARKIQFFLSQNFFVAEQFTGLPGSYVPIKETIKGFKMIIDGKLDDLPEDAFRNVGPIEDVVKKAEKMGVTPKNPEAKAMLEAK.

153–160 (GGAGVGKT) contacts ATP.

It belongs to the ATPase alpha/beta chains family. As to quaternary structure, F-type ATPases have 2 components, CF(1) - the catalytic core - and CF(0) - the membrane proton channel. CF(1) has five subunits: alpha(3), beta(3), gamma(1), delta(1), epsilon(1). CF(0) has three main subunits: a(1), b(2) and c(9-12). The alpha and beta chains form an alternating ring which encloses part of the gamma chain. CF(1) is attached to CF(0) by a central stalk formed by the gamma and epsilon chains, while a peripheral stalk is formed by the delta and b chains.

It is found in the cell membrane. The catalysed reaction is ATP + H2O + 4 H(+)(in) = ADP + phosphate + 5 H(+)(out). Produces ATP from ADP in the presence of a proton gradient across the membrane. The catalytic sites are hosted primarily by the beta subunits. This chain is ATP synthase subunit beta, found in Lactobacillus gasseri (strain ATCC 33323 / DSM 20243 / BCRC 14619 / CIP 102991 / JCM 1131 / KCTC 3163 / NCIMB 11718 / NCTC 13722 / AM63).